The sequence spans 207 residues: MSCTIEKILTDAKTLLERLREHDAAAESLVDQSAALHRRVAAMREAGAVLPEQYQEDASDVKDMSKYKPHILLSQENTQIRDLQQENRELWVSLEEHQDALELIMSKYRKQMLQLMVAKKAVDAEPVLKAHQSHSAEIESQIDRICEMGAVMRRAVQVDDNQFCKVQERLAQLELENKELRELLSISSESLQVGKESSVAPASQTIK.

Coiled coils occupy residues 70-102 and 164-192; these read HILLSQENTQIRDLQQENRELWVSLEEHQDALE and CKVQERLAQLELENKELRELLSISSESLQ.

It belongs to the SIKE family. As to quaternary structure, interacts with IKBKE and TBK1 via its coiled coil region. Interaction with TBK1 is disrupted upon viral infection or TLR3 stimulation. Interacts with CDC42BPB. Interacts with SIKE1 which mediates association with the STRIPAK core complex composed of PP2A catalytic and scaffolding subunits, the striatins (PP2A regulatory subunits), the striatin-associated proteins MOB4, STRIP1 and STRIP2, PDCD10 and members of the STE20 kinases, such as STK24 and STK26.

The protein localises to the cytoplasm. In terms of biological role, physiological suppressor of IKK-epsilon and TBK1 that plays an inhibitory role in virus- and TLR3-triggered IRF3. Inhibits TLR3-mediated activation of interferon-stimulated response elements (ISRE) and the IFN-beta promoter. May act by disrupting the interactions of IKBKE or TBK1 with TICAM1/TRIF, IRF3 and RIGI. Does not inhibit NF-kappa-B activation pathways. Associates with the striatin-interacting phosphatase and kinase (STRIPAK) core complex, forming the extended (SIKE1:SLMAP)STRIPAK complex. The (SIKE1:SLMAP)STRIPAK complex dephosphorylates STK3 leading to the inhibition of Hippo signaling and the control of cell growth. The sequence is that of Suppressor of IKBKE 1 (Sike1) from Mus musculus (Mouse).